The following is a 247-amino-acid chain: LOB domain-containing protein 38 (247 aa).

One can recognise an LOB domain in the interval 1–107; that stretch reads MSCNGCRVLR…VETVLRGGSL (107 aa). The segment covering 157-170 has biased composition (low complexity); that stretch reads FSSSRSRSRSTASP. Positions 157–184 are disordered; that stretch reads FSSSRSRSRSTASPPKRKRLSSEQQPSS.

This sequence belongs to the LOB domain-containing protein family. Expressed in young shoots, roots, stems, leaves and flowers.

The protein is LOB domain-containing protein 38 (LBD38) of Arabidopsis thaliana (Mouse-ear cress).